Here is a 265-residue protein sequence, read N- to C-terminus: Glutamate racemase (265 aa).

Residues 7 to 8 (DS) and 39 to 40 (YG) contribute to the substrate site. The active-site Proton donor/acceptor is cysteine 70. 71 to 72 (NT) provides a ligand contact to substrate. Cysteine 177 functions as the Proton donor/acceptor in the catalytic mechanism.

This sequence belongs to the aspartate/glutamate racemases family.

It catalyses the reaction L-glutamate = D-glutamate. It functions in the pathway cell wall biogenesis; peptidoglycan biosynthesis. Its function is as follows. Provides the (R)-glutamate required for cell wall biosynthesis. The protein is Glutamate racemase of Prochlorococcus marinus (strain NATL2A).